Reading from the N-terminus, the 321-residue chain is Oxidoreductase P35 (321 aa).

It belongs to the Gfo/Idh/MocA family.

It is found in the cell surface. Its function is as follows. Oxidoreductase that may be involved in ulvan degradation. Ulvan is the main polysaccharide component of the Ulvales (green seaweed) cell wall. It is composed of disaccharide building blocks comprising 3-sulfated rhamnose (Rha3S) linked to D-glucuronic acid (GlcA), L-iduronic acid (IduA), or D-xylose (Xyl). The polypeptide is Oxidoreductase P35 (Formosa agariphila (strain DSM 15362 / KCTC 12365 / LMG 23005 / KMM 3901 / M-2Alg 35-1)).